The following is a 207-amino-acid chain: Protein ERP4 (207 aa).

The signal sequence occupies residues Met-1–Ser-21. Residues Ser-22–Thr-174 are Lumenal-facing. One can recognise a GOLD domain in the interval Lys-36–Lys-118. A helical transmembrane segment spans residues Trp-175–Ile-195. Topologically, residues Gln-196 to Val-207 are cytoplasmic.

Belongs to the EMP24/GP25L family.

Its subcellular location is the endoplasmic reticulum membrane. Involved in vesicular protein trafficking. This is Protein ERP4 (ERP4) from Saccharomyces cerevisiae (strain ATCC 204508 / S288c) (Baker's yeast).